A 389-amino-acid polypeptide reads, in one-letter code: Aspartic protease 6 (389 aa).

An N-terminal signal peptide occupies residues 1-15 (MKTFILLAVLGLASA). In terms of domain architecture, Peptidase A1 spans 71 to 384 (YLGNITIGTP…DIGNKRMGFA (314 aa)). N-linked (GlcNAc...) asparagine glycosylation is present at Asn74. Asp89 is a catalytic residue. Cys102 and Cys106 are disulfide-bonded. The active site involves Asp277. Residues Cys312 and Cys344 are joined by a disulfide bond.

The protein belongs to the peptidase A1 family. In terms of processing, glycosylated. Has phosphorylcholine-substituted oligosaccharide N-glycans. Expressed in intestine, muscles, pharynx and hypodermis.

It is found in the secreted. Aspartic protease. In Caenorhabditis elegans, this protein is Aspartic protease 6.